The sequence spans 227 residues: Ribonuclease 3 (227 aa).

Residues 6–128 (ASDYQQRIGY…VIAAIYLDAD (123 aa)) enclose the RNase III domain. Glu41 is a Mg(2+) binding site. Asp45 is a catalytic residue. Mg(2+) is bound by residues Asp114 and Glu117. Residue Glu117 is part of the active site. In terms of domain architecture, DRBM spans 155–225 (DPKTRLQEWL…ASHAIDQLDS (71 aa)). Residues 203–212 (GEGSSRRLAE) are compositionally biased toward basic and acidic residues. Residues 203–227 (GEGSSRRLAEQDAASHAIDQLDSNK) are disordered.

This sequence belongs to the ribonuclease III family. As to quaternary structure, homodimer. Mg(2+) is required as a cofactor.

It localises to the cytoplasm. It catalyses the reaction Endonucleolytic cleavage to 5'-phosphomonoester.. Functionally, digests double-stranded RNA. Involved in the processing of primary rRNA transcript to yield the immediate precursors to the large and small rRNAs (23S and 16S). Processes some mRNAs, and tRNAs when they are encoded in the rRNA operon. Processes pre-crRNA and tracrRNA of type II CRISPR loci if present in the organism. This Xylella fastidiosa (strain M23) protein is Ribonuclease 3.